A 348-amino-acid chain; its full sequence is GTPase Obg 1 (348 aa).

One can recognise an Obg domain in the interval 1-159 (MSFVDEAKIH…HCVLLKLKIV (159 aa)). Residues 160-329 (SDVGIIGMPN…LHAQVKKAVV (170 aa)) enclose the OBG-type G domain. GTP-binding positions include 166 to 173 (GMPNAGKS), 191 to 195 (FTTLE), 212 to 215 (DIPG), 279 to 282 (NKCD), and 310 to 312 (GDE). Positions 173 and 193 each coordinate Mg(2+).

The protein belongs to the TRAFAC class OBG-HflX-like GTPase superfamily. OBG GTPase family. Monomer. Mg(2+) serves as cofactor.

The protein resides in the cytoplasm. An essential GTPase which binds GTP, GDP and possibly (p)ppGpp with moderate affinity, with high nucleotide exchange rates and a fairly low GTP hydrolysis rate. Plays a role in control of the cell cycle, stress response, ribosome biogenesis and in those bacteria that undergo differentiation, in morphogenesis control. This chain is GTPase Obg 1, found in Anaplasma marginale (strain St. Maries).